A 340-amino-acid polypeptide reads, in one-letter code: Guanine nucleotide-binding protein G(I)/G(S)/G(T) subunit beta-3 (340 aa).

WD repeat units lie at residues 53–83 (GHLA…IVWD), 95–125 (LRSS…SIYN), 141–170 (AHTG…ALWD), 182–212 (GHTG…KLWD), 224–254 (GHES…RLFD), 268–298 (SIIC…NVWD), and 310–340 (GHDN…KIWN).

The protein belongs to the WD repeat G protein beta family. As to quaternary structure, g proteins are composed of 3 units, alpha, beta and gamma. Interacts with RASD2.

Its function is as follows. Guanine nucleotide-binding proteins (G proteins) are involved as a modulator or transducer in various transmembrane signaling systems. The beta and gamma chains are required for the GTPase activity, for replacement of GDP by GTP, and for G protein-effector interaction. The polypeptide is Guanine nucleotide-binding protein G(I)/G(S)/G(T) subunit beta-3 (GNB3) (Homo sapiens (Human)).